Here is a 324-residue protein sequence, read N- to C-terminus: tRNA-modifying protein YgfZ (324 aa).

W184 contributes to the folate binding site.

It belongs to the tRNA-modifying YgfZ family.

The protein resides in the cytoplasm. Its function is as follows. Folate-binding protein involved in regulating the level of ATP-DnaA and in the modification of some tRNAs. It is probably a key factor in regulatory networks that act via tRNA modification, such as initiation of chromosomal replication. This chain is tRNA-modifying protein YgfZ, found in Vibrio vulnificus (strain YJ016).